A 526-amino-acid chain; its full sequence is Butyrophilin subfamily 1 member A1 (526 aa).

Positions 1 to 26 (MAVFPSSGLPRCLLTLILLQLPKLDS) are cleaved as a signal peptide. Ig-like V-type domains follow at residues 27 to 138 (APFD…ALVH) and 148 to 234 (PHIS…VEIS). Residues 27-242 (APFDVIGPPE…ISIPASSLPR (216 aa)) lie on the Extracellular side of the membrane. 2 disulfides stabilise this stretch: C50-C124 and C164-C218. N55 and N215 each carry an N-linked (GlcNAc...) asparagine glycan. Residues 243 to 269 (LTPWIVAVAVILMVLGLLTIGSIFFTW) form a helical membrane-spanning segment. Residues 270–526 (RLYNERPRER…IPTQPSQGAP (257 aa)) are Cytoplasmic-facing. The region spanning 285–479 (SKERLLEELK…LTICPIADGP (195 aa)) is the B30.2/SPRY domain. Residues 495 to 526 (IPLSPMGEDSAPRDADTLHSKLIPTQPSQGAP) are disordered. Positions 504 to 513 (SAPRDADTLH) are enriched in basic and acidic residues. Residues 517–526 (IPTQPSQGAP) show a composition bias toward polar residues.

It belongs to the immunoglobulin superfamily. BTN/MOG family. As to quaternary structure, seems to associate with xanthine dehydrogenase/oxidase. Post-translationally, N-glycosylated.

The protein localises to the membrane. It localises to the secreted. May function in the secretion of milk-fat droplets. May act as a specific membrane-associated receptor for the association of cytoplasmic droplets with the apical plasma membrane. Inhibits the proliferation of CD4 and CD8 T-cells activated by anti-CD3 antibodies, T-cell metabolism and IL2 and IFNG secretion. This Homo sapiens (Human) protein is Butyrophilin subfamily 1 member A1 (BTN1A1).